The primary structure comprises 119 residues: Beta-2-microglobulin (119 aa).

The first 20 residues, 1 to 20, serve as a signal peptide directing secretion; that stretch reads MARFVVAALLVLLCLSGLEA. One can recognise an Ig-like C1-type domain in the interval 25–114; that stretch reads PKIQVYSRHP…VTFPTPKTVK (90 aa). C45 and C100 are oxidised to a cystine.

The protein belongs to the beta-2-microglobulin family. In terms of assembly, heterodimer of an alpha chain and a beta chain. Beta-2-microglobulin is the beta-chain of major histocompatibility complex class I molecules.

It is found in the secreted. In terms of biological role, component of the class I major histocompatibility complex (MHC). Involved in the presentation of peptide antigens to the immune system. This Cebus albifrons (White-fronted capuchin) protein is Beta-2-microglobulin (B2M).